We begin with the raw amino-acid sequence, 626 residues long: METKQFKAESKRLLDLMINSIYTHKEIFLRELISNSSDAIDKIYYKTLTDDSLKFERDNYYIRVVSDKENRILKIADTGIGMTKEELENNLGVIAKSGSLQFKKENEVKEGYDIIGQFGVGFYSAFLVSDDVTVISKAFGSNEAYKWNSKGAEGYTIEPCEKETYGTEIILKIKDNTEEENYDEFLEEYTLKSIIKKYSDFIRYPIKMDLTKTKPKEDNKEEFEEYKEEETINSMVPIWRKNKNELKAEDYENFYAEKHYGFDKPIKYIHTSVDGVVSYNAILFIPETTPYDFYTKEYEKGLELYSSGVLIMNKCGDLLPDYFGFVKGIVDSEDLSLNISREILQHDRQLKLIAKNIKTKIKNELESLLKKERDKYEKFYESFGRQLKYGVYSDFGSNKDILQDLLMFYSSKEKKMVTLAEYVSRMPEDQKYIYYAVGESNERIEKLPQIEGVLDKGYEVLYFTDDIDEFAIKMLMSYKEKEFKSVSSGDLGIEGEEKENTSNSDDKENKELFESMKDMLSGKVKDVRASKRLKNHPVCLANEGELSIEMEKVLNAMPNNQNIKADKVLEININHDVFKSLKEAYEGDKEKLKLYTDLLYNQALLIEGLAINDPVEFTNNICKIMK.

Positions 1–341 (METKQFKAES…SEDLSLNISR (341 aa)) are a; substrate-binding. Positions 342–552 (EILQHDRQLK…EGELSIEMEK (211 aa)) are b. Positions 490 to 509 (DLGIEGEEKENTSNSDDKEN) are disordered. Basic and acidic residues predominate over residues 498–509 (KENTSNSDDKEN). A c region spans residues 553-626 (VLNAMPNNQN…FTNNICKIMK (74 aa)).

It belongs to the heat shock protein 90 family. In terms of assembly, homodimer.

The protein resides in the cytoplasm. Molecular chaperone. Has ATPase activity. The sequence is that of Chaperone protein HtpG from Clostridium botulinum (strain ATCC 19397 / Type A).